We begin with the raw amino-acid sequence, 219 residues long: 23.6 kDa heat shock protein, mitochondrial (219 aa).

The N-terminal 29 residues, 1–29 (MALARQCLSKRLAAGCALARPLHAASPVA), are a transit peptide targeting the mitochondrion. The sHSP domain maps to 104–219 (QVAETLTRPL…KRSVTEVKVR (116 aa)).

This sequence belongs to the small heat shock protein (HSP20) family. May form oligomeric structures.

It localises to the mitochondrion. The protein is 23.6 kDa heat shock protein, mitochondrial (HSP23.6) of Oryza sativa subsp. japonica (Rice).